The sequence spans 435 residues: Serine--tRNA ligase (435 aa).

237 to 239 contacts L-serine; it reads TAE. 268–270 contributes to the ATP binding site; sequence RSE. E291 is a binding site for L-serine. An ATP-binding site is contributed by 355 to 358; it reads EISS. An L-serine-binding site is contributed by S390.

It belongs to the class-II aminoacyl-tRNA synthetase family. Type-1 seryl-tRNA synthetase subfamily. Homodimer. The tRNA molecule binds across the dimer.

The protein resides in the cytoplasm. It catalyses the reaction tRNA(Ser) + L-serine + ATP = L-seryl-tRNA(Ser) + AMP + diphosphate + H(+). It carries out the reaction tRNA(Sec) + L-serine + ATP = L-seryl-tRNA(Sec) + AMP + diphosphate + H(+). It participates in aminoacyl-tRNA biosynthesis; selenocysteinyl-tRNA(Sec) biosynthesis; L-seryl-tRNA(Sec) from L-serine and tRNA(Sec): step 1/1. Its function is as follows. Catalyzes the attachment of serine to tRNA(Ser). Is also able to aminoacylate tRNA(Sec) with serine, to form the misacylated tRNA L-seryl-tRNA(Sec), which will be further converted into selenocysteinyl-tRNA(Sec). This Lactobacillus delbrueckii subsp. bulgaricus (strain ATCC BAA-365 / Lb-18) protein is Serine--tRNA ligase.